The sequence spans 131 residues: Methylated-DNA--protein-cysteine methyltransferase (131 aa).

Cys98 serves as the catalytic Nucleophile; methyl group acceptor.

Belongs to the MGMT family.

It is found in the cytoplasm. It carries out the reaction a 6-O-methyl-2'-deoxyguanosine in DNA + L-cysteinyl-[protein] = S-methyl-L-cysteinyl-[protein] + a 2'-deoxyguanosine in DNA. The enzyme catalyses a 4-O-methyl-thymidine in DNA + L-cysteinyl-[protein] = a thymidine in DNA + S-methyl-L-cysteinyl-[protein]. Its function is as follows. Involved in the cellular defense against the biological effects of O6-methylguanine (O6-MeG) and O4-methylthymine (O4-MeT) in DNA. Repairs the methylated nucleobase in DNA by stoichiometrically transferring the methyl group to a cysteine residue in the enzyme. This is a suicide reaction: the enzyme is irreversibly inactivated. The protein is Methylated-DNA--protein-cysteine methyltransferase (ogt) of Methanopyrus kandleri (strain AV19 / DSM 6324 / JCM 9639 / NBRC 100938).